The primary structure comprises 768 residues: Probable LRR receptor-like serine/threonine-protein kinase At4g37250 (768 aa).

Positions 1 to 21 are cleaved as a signal peptide; the sequence is MRMELISVIFFFFCSVLSSSA. Topologically, residues 22–328 are extracellular; sequence LNSDGLVLMK…PNPRTGLRPG (307 aa). N-linked (GlcNAc...) asparagine glycosylation occurs at asparagine 64. LRR repeat units lie at residues 67–90, 91–112, 115–137, 139–162, 163–183, 184–206, 207–229, and 232–254; these read KVLT…GSLL, TLQS…SFFN, ELRF…IGDL, NLLT…ASLR, NLTV…GGWR, VVEF…FGGY, SLQY…IGVN, and RNVT…PVFL. A glycan (N-linked (GlcNAc...) asparagine) is linked at asparagine 99. Residues asparagine 144, asparagine 163, asparagine 196, asparagine 212, asparagine 233, and asparagine 242 are each glycosylated (N-linked (GlcNAc...) asparagine). Residues 301–324 are disordered; that stretch reads PNTIGSNPVTDPNSQQTDPNPRTG. Positions 303 to 320 are enriched in polar residues; that stretch reads TIGSNPVTDPNSQQTDPN. The helical transmembrane segment at 329-349 threads the bilayer; sequence VIIGIVVGDIAGIGILAVIFL. Over 350–768 the chain is Cytoplasmic; that stretch reads YIYRCKKNKI…IKSSSFHYGH (419 aa). The interval 361–432 is disordered; it reads DNNNNDKQRT…NANQRSGDNK (72 aa). Low complexity predominate over residues 378 to 387; the sequence is STFSSSSSSP. A compositionally biased stretch (acidic residues) spans 407–420; sequence PSEEEDEDDEDEES. Positions 449–756 constitute a Protein kinase domain; sequence KASAYILGAT…AVLERFHPNS (308 aa). 2 positions are modified to phosphoserine: serine 451 and serine 531. Position 553 is a phosphothreonine (threonine 553). Phosphoserine is present on serine 662.

The protein belongs to the protein kinase superfamily. Ser/Thr protein kinase family.

It is found in the membrane. It catalyses the reaction L-seryl-[protein] + ATP = O-phospho-L-seryl-[protein] + ADP + H(+). It carries out the reaction L-threonyl-[protein] + ATP = O-phospho-L-threonyl-[protein] + ADP + H(+). The sequence is that of Probable LRR receptor-like serine/threonine-protein kinase At4g37250 from Arabidopsis thaliana (Mouse-ear cress).